The primary structure comprises 375 residues: MAIYWIVSYSILVFCFFELAMINQASEAKTKILINYFFLIGVFALILFAGIRGPDSGMDDSQYVGFFHDFSRQTGMTGYQAVANIYRYENFFMVLAWVASCFTHESYFFLLFISFIAVSTNAWVYKKYSPLILCSLCLYSAHLFINKDMNQIRFGLCSAFAIAFICSLVARNYLLALLFIVLSTQSHSTGYTIVMIIPFFFIRERKYLPLVLVIASIPLGIIGGKKLFLDSLGIVPVLGERAASYSGTNFDTTSPVFGLANLKNIAFIGAFTLYYFRKGIMKEDRFVYILLIAYSIGAAVRITFSDFSIFGGRVGNLFLHTEPLLFAFLMLRIRNLLLNFFMLFSITTYYLAYNTILSAQSIMGYSVAPLFRIFS.

9 helical membrane passes run A2 to I22, K31 to I51, M93 to I113, I162 to L182, L208 to F228, V256 to F276, V287 to F307, I309 to L329, and L337 to L357.

Its subcellular location is the cell membrane. It functions in the pathway glycan metabolism; exopolysaccharide biosynthesis. In terms of biological role, involved in the biosynthesis of amylovoran which functions as a virulence factor. The chain is Amylovoran biosynthesis protein AmsC (amsC) from Erwinia amylovora (Fire blight bacteria).